The chain runs to 288 residues: 11-beta-hydroxysteroid dehydrogenase 1 (288 aa).

Over 1–4 the chain is Cytoplasmic; sequence MKKY. A helical; Signal-anchor for type II membrane protein membrane pass occupies residues 5 to 20; that stretch reads LLPVLVLCLGYYYSTN. The Lumenal portion of the chain corresponds to 21-288; that stretch reads EEFRPEMLQG…SYNRDLFVSN (268 aa). Residues 37-63, 88-89, and 115-117 each bind NADP(+); these read GASKGIGREMAYHLSKMGAHVVLTARS, TM, and NHI. A glycan (N-linked (GlcNAc...) asparagine) is linked at Asn-158. Residue Ser-166 participates in substrate binding. Tyr-179 acts as the Proton acceptor in catalysis. Residue 179 to 183 coordinates NADP(+); that stretch reads YSASK. An N-linked (GlcNAc...) asparagine glycan is attached at Asn-203. NADP(+) contacts are provided by residues 212 to 218 and 214 to 218; these read GFIDTET and IDTET.

The protein belongs to the short-chain dehydrogenases/reductases (SDR) family. In terms of assembly, homodimer. In terms of processing, glycosylated. Liver, kidney, lung and testis. Brain. Expressed in liver (at protein level).

The protein localises to the endoplasmic reticulum membrane. The catalysed reaction is an 11beta-hydroxysteroid + NADP(+) = an 11-oxosteroid + NADPH + H(+). It catalyses the reaction corticosterone + NADP(+) = 11-dehydrocorticosterone + NADPH + H(+). The enzyme catalyses a 7beta-hydroxysteroid + NADP(+) = a 7-oxosteroid + NADPH + H(+). It carries out the reaction 7-oxocholesterol + NADPH + H(+) = 7beta-hydroxycholesterol + NADP(+). The catalysed reaction is chenodeoxycholate + NADP(+) = 7-oxolithocholate + NADPH + H(+). It catalyses the reaction 7-oxolithocholate + NADPH + H(+) = ursodeoxycholate + NADP(+). The enzyme catalyses glycochenodeoxycholate + NADP(+) = 7-oxoglycolithocholate + NADPH + H(+). It carries out the reaction taurochenodeoxycholate + NADP(+) = 7-oxotaurolithocholate + NADPH + H(+). The catalysed reaction is tauroursodeoxycholate + NADP(+) = 7-oxotaurolithocholate + NADPH + H(+). It catalyses the reaction glycoursodeoxycholate + NADP(+) = 7-oxoglycolithocholate + NADPH + H(+). The enzyme catalyses 7-oxopregnenolone + NADPH + H(+) = 7beta-hydroxypregnenolone + NADP(+). It carries out the reaction 3beta,7alpha-dihydroxyandrost-5-en-17-one + NADP(+) = 3beta-hydroxy-5-androstene-7,17-dione + NADPH + H(+). The catalysed reaction is 3beta-hydroxy-5-androstene-7,17-dione + NADPH + H(+) = 3beta,7beta-dihydroxyandrost-5-en-17-one + NADP(+). It catalyses the reaction 3beta-hydroxy-5alpha-androstane-7,17-dione + NADPH + H(+) = 3beta,7beta-dihydroxy-5alpha-androstan-17-one + NADP(+). Functionally, controls the reversible conversion of biologically active glucocorticoids such as 11-dehydrocorticosterone to corticosterone using NADP(H). Participates in the corticosteroid receptor-mediated anti-inflammatory response, as well as metabolic and homeostatic processes. Bidirectional in vitro, predominantly functions as a reductase in vivo, thereby increasing the concentration of active glucocorticoids. It has broad substrate specificity, besides glucocorticoids, it accepts other steroid and sterol substrates. Interconverts 7-oxo- and 7-hydroxy-neurosteroids such as 7-oxopregnenolone and 7beta-hydroxypregnenolone, 7-oxodehydroepiandrosterone (3beta-hydroxy-5-androstene-7,17-dione) and 7beta-hydroxydehydroepiandrosterone (3beta,7beta-dihydroxyandrost-5-en-17-one), among others. Catalyzes the stereo-specific conversion of the major dietary oxysterol, 7-ketocholesterol (7-oxocholesterol), into the more polar 7-beta-hydroxycholesterol metabolite. 7-oxocholesterol is one of the most important oxysterols, it participates in several events such as induction of apoptosis, accumulation in atherosclerotic lesions, lipid peroxidation, and induction of foam cell formation. Mediates the 7-oxo reduction of 7-oxolithocholate mainly to chenodeoxycholate, and to a lesser extent to ursodeoxycholate, both in its free form and when conjugated to glycine or taurine, providing a link between glucocorticoid activation and bile acid metabolism. Catalyzes the synthesis of 7-beta-25-dihydroxycholesterol from 7-oxo-25-hydroxycholesterol in vitro, which acts as a ligand for the G-protein-coupled receptor (GPCR) Epstein-Barr virus-induced gene 2 (EBI2) and may thereby regulate immune cell migration. The sequence is that of 11-beta-hydroxysteroid dehydrogenase 1 from Rattus norvegicus (Rat).